A 554-amino-acid chain; its full sequence is Oxygen-dependent choline dehydrogenase (554 aa).

FAD is bound at residue 4 to 33 (DYIIIGAGSAGNVLATRLTEDPNTTVLLLE). His473 (proton acceptor) is an active-site residue.

This sequence belongs to the GMC oxidoreductase family. The cofactor is FAD.

It catalyses the reaction choline + A = betaine aldehyde + AH2. It carries out the reaction betaine aldehyde + NAD(+) + H2O = glycine betaine + NADH + 2 H(+). The protein operates within amine and polyamine biosynthesis; betaine biosynthesis via choline pathway; betaine aldehyde from choline (cytochrome c reductase route): step 1/1. Its function is as follows. Involved in the biosynthesis of the osmoprotectant glycine betaine. Catalyzes the oxidation of choline to betaine aldehyde and betaine aldehyde to glycine betaine at the same rate. The protein is Oxygen-dependent choline dehydrogenase of Klebsiella pneumoniae subsp. pneumoniae (strain ATCC 700721 / MGH 78578).